Here is a 244-residue protein sequence, read N- to C-terminus: Ribonuclease 3 (244 aa).

In terms of domain architecture, RNase III spans 5–136; that stretch reads LAELERAIGI…LVGAIYLDQG (132 aa). Glu49 lines the Mg(2+) pocket. Residue Asp53 is part of the active site. Mg(2+)-binding residues include Asp122 and Glu125. Glu125 is an active-site residue. A DRBM domain is found at 161 to 229; that stretch reads DPTTRLQELM…ARKALAAWDK (69 aa).

Belongs to the ribonuclease III family. In terms of assembly, homodimer. Mg(2+) serves as cofactor.

It is found in the cytoplasm. The catalysed reaction is Endonucleolytic cleavage to 5'-phosphomonoester.. Functionally, digests double-stranded RNA. Involved in the processing of primary rRNA transcript to yield the immediate precursors to the large and small rRNAs (23S and 16S). Processes some mRNAs, and tRNAs when they are encoded in the rRNA operon. Processes pre-crRNA and tracrRNA of type II CRISPR loci if present in the organism. This chain is Ribonuclease 3, found in Chloroflexus aurantiacus (strain ATCC 29364 / DSM 637 / Y-400-fl).